Here is a 451-residue protein sequence, read N- to C-terminus: MLVTAYLFLLGLLALWGVLEFSACHSKPSASSNALGNPAFRQFQYDFYRTYFPALAADWLQGPYLYKLYQHYHFLEGQIAIIYVCGFGASVFAGLVSVPLTSRLGRRKSCILFCLLLSASYLCKLSQEYFVLMTGRVLGGFSSSLLFSCFEAWYTHEHAEQHDFPAEWLPHTFTRAAAWNGGIAIAAGITANVCAEWLGLGPASPSVLAVPLLVLSVVLVIREWDENYGQTSSFRRVCGDGLRCLLRDRRVLLLGTIQALFESVVYIFIFLWTPVLDPHNAPLGIAFSSFMAASAVGSSLYHLATSKKYHLQPMHVLCLSILMVFFSLFMLTFSTAPGQEHPTESLLAFLLIELACGLYFPAMRFLRRRLIPEKEQTGVLNWFRVPLNLLAGLGLLVLHDSDYQSGTRNMFSLCAVTMLLALLCVVSLFTMVRNDSELRLPASEPEPNGTE.

12 helical membrane passes run 1–21 (MLVT…VLEF), 45–65 (YDFY…GPYL), 79–99 (IAII…VSVP), 130–150 (FVLM…FSCF), 180–200 (NGGI…WLGL), 201–221 (GPAS…VLVI), 251–271 (VLLL…FIFL), 281–301 (APLG…SSLY), 316–336 (VLCL…FSTA), 346–366 (LLAF…MRFL), 378–398 (GVLN…LLVL), and 410–430 (MFSL…SLFT).

The protein belongs to the major facilitator superfamily.

It localises to the cell membrane. Functionally, mediates high-affinity intracellular uptake of the rare oligo-element molybdenum. The chain is Molybdate-anion transporter (mfsd5) from Xenopus laevis (African clawed frog).